We begin with the raw amino-acid sequence, 297 residues long: tRNA pseudouridine synthase B (297 aa).

The Nucleophile role is filled by aspartate 39.

The protein belongs to the pseudouridine synthase TruB family. Type 1 subfamily.

It carries out the reaction uridine(55) in tRNA = pseudouridine(55) in tRNA. Its function is as follows. Responsible for synthesis of pseudouridine from uracil-55 in the psi GC loop of transfer RNAs. The sequence is that of tRNA pseudouridine synthase B from Lactobacillus gasseri (strain ATCC 33323 / DSM 20243 / BCRC 14619 / CIP 102991 / JCM 1131 / KCTC 3163 / NCIMB 11718 / NCTC 13722 / AM63).